Reading from the N-terminus, the 89-residue chain is Small ribosomal subunit protein uS15 (89 aa).

The protein belongs to the universal ribosomal protein uS15 family. In terms of assembly, part of the 30S ribosomal subunit. Forms a bridge to the 50S subunit in the 70S ribosome, contacting the 23S rRNA.

One of the primary rRNA binding proteins, it binds directly to 16S rRNA where it helps nucleate assembly of the platform of the 30S subunit by binding and bridging several RNA helices of the 16S rRNA. Functionally, forms an intersubunit bridge (bridge B4) with the 23S rRNA of the 50S subunit in the ribosome. This Acholeplasma laidlawii (strain PG-8A) protein is Small ribosomal subunit protein uS15.